An 88-amino-acid chain; its full sequence is Large ribosomal subunit protein bL27 (88 aa).

A disordered region spans residues 1 to 20 (MASKKGVGSTKDGRDSIAKR).

It belongs to the bacterial ribosomal protein bL27 family.

This Geobacillus stearothermophilus (Bacillus stearothermophilus) protein is Large ribosomal subunit protein bL27 (rpmA).